Here is a 129-residue protein sequence, read N- to C-terminus: uncharacterized protein (129 aa).

A helical membrane pass occupies residues 46-66; that stretch reads FFHFFFSFLLHLISPAVTGGI.

It localises to the membrane. This is an uncharacterized protein from Saccharomyces cerevisiae (strain ATCC 204508 / S288c) (Baker's yeast).